Consider the following 1142-residue polypeptide: ABC transporter F family member 4 (1142 aa).

The tract at residues 1 to 564 (MGPKGKKKGQ…EDAFELAKKK (564 aa)) is disordered. Composition is skewed to low complexity over residues 121–143 (PQPV…QQQQ), 153–166 (PQPV…APQK), and 182–195 (PQPV…APQK). Composition is skewed to acidic residues over residues 203-212 (SEDEDEEDEV) and 233-244 (EEEEEEEEEEIE). Basic residues-rich tracts occupy residues 249-261 (KGGK…KGGK) and 280-290 (KGGKKDKKKGS). The segment covering 295-306 (EEEEEEEEEEIE) has biased composition (acidic residues). Basic and acidic residues predominate over residues 314–328 (NKKDQKKGGKGKHVE). The segment covering 329-340 (EEEEEEEEEEIE) has biased composition (acidic residues). The segment covering 377–387 (KGGKKDKKKGS) has biased composition (basic residues). 2 stretches are compositionally biased toward acidic residues: residues 392-404 (EEEE…EEIE) and 441-451 (EEEEQEQEEEE). Positions 456–467 (SKSNKKDKKKGK) are enriched in basic residues. Residues 471–480 (EEEEEEEEEE) show a composition bias toward acidic residues. A compositionally biased stretch (basic residues) spans 485-496 (SKSNKKDKKKGS). Residues 501 to 518 (EEEEEEEEEEEEEKEEEE) are compositionally biased toward acidic residues. Over residues 530-548 (AKKVKKVDKKEKKKEKEKK) the composition is skewed to basic residues. 2 ABC transporter domains span residues 604–857 (IKFD…RSKE) and 923–1139 (LVFK…DNMV). ATP contacts are provided by residues 636–643 (GRNGIGKS) and 956–963 (GMNGVGKS).

This sequence belongs to the ABC transporter superfamily.

The protein is ABC transporter F family member 4 (abcF4) of Dictyostelium discoideum (Social amoeba).